A 949-amino-acid chain; its full sequence is Serine/threonine-protein kinase KIPK2 (949 aa).

Disordered stretches follow at residues 79 to 116 (LETS…VGPS), 323 to 344 (TALS…TEKS), 407 to 426 (STST…DKNV), and 495 to 525 (SSEK…SNLS). Low complexity predominate over residues 81–94 (TSASAGTSRSTSPS). Polar residues-rich tracts occupy residues 407-420 (STST…NTSH) and 495-512 (SSEK…LGDY). Positions 513–525 (SSSTSMSEESNLS) are enriched in low complexity. In terms of domain architecture, Protein kinase spans 559–898 (FNLLKKLGCG…AAEIKRHPFF (340 aa)). ATP is bound by residues 565–573 (LGCGDIGTV) and K588. D684 (proton acceptor) is an active-site residue.

The protein belongs to the protein kinase superfamily. Ser/Thr protein kinase family. As to quaternary structure, interacts with KCBP, PERK8, PERK9, PERK10 and PERK13.

The enzyme catalyses L-seryl-[protein] + ATP = O-phospho-L-seryl-[protein] + ADP + H(+). The catalysed reaction is L-threonyl-[protein] + ATP = O-phospho-L-threonyl-[protein] + ADP + H(+). Its function is as follows. Serine/threonine-protein kinase that could be involved in the negative regulation of root growth. This chain is Serine/threonine-protein kinase KIPK2, found in Arabidopsis thaliana (Mouse-ear cress).